A 1067-amino-acid polypeptide reads, in one-letter code: Chitinase-like protein C25A8.4 (1067 aa).

Positions Met1–Cys18 are cleaved as a signal peptide. 3 GH18 domains span residues Pro26–Thr364, Cys372–Gln727, and Phe743–Arg1067. A disulfide bridge links Cys30 with Cys51. N-linked (GlcNAc...) asparagine glycosylation is found at Asn47 and Asn216. A disulfide bridge connects residues Cys376 and Cys397. Residues Asn475, Asn538, and Asn710 are each glycosylated (N-linked (GlcNAc...) asparagine). An intrachain disulfide couples Cys747 to Cys768. 2 N-linked (GlcNAc...) asparagine glycosylation sites follow: Asn797 and Asn830. Glu855 functions as the Proton donor in the catalytic mechanism. Residues Asn887, Asn933, and Asn1010 are each glycosylated (N-linked (GlcNAc...) asparagine).

Belongs to the glycosyl hydrolase 18 family.

It localises to the secreted. Its function is as follows. Putative chitinase. The protein is Chitinase-like protein C25A8.4 (cht-3) of Caenorhabditis elegans.